The primary structure comprises 309 residues: Olfactory receptor 8A1 (309 aa).

Topologically, residues 1 to 28 are extracellular; that stretch reads MTAENQSTVTEFILGGLTNRPELQLPLF. The helical transmembrane segment at 29-49 threads the bilayer; the sequence is LLFLGIYVVTMVGNLGMITLI. The Cytoplasmic portion of the chain corresponds to 50–56; it reads GLNSQLH. Residues 57–77 traverse the membrane as a helical segment; sequence TPMYFFLSNLSLVDLCYSSVI. Residues 78–90 are Extracellular-facing; sequence TPKMLINFVSQRN. Residues 91 to 111 form a helical membrane-spanning segment; that stretch reads LISYVGCMSQLYFFLVFVIAE. An intrachain disulfide couples Cys97 to Cys188. The Cytoplasmic segment spans residues 112–133; sequence CYMLTVMAYDRYVAICQPLLYN. Residues 134–154 traverse the membrane as a helical segment; that stretch reads IIMSPALCSLLVAFVYAVGLI. The Extracellular segment spans residues 155 to 195; sequence GSAIETGLMLKLNYCEDLISHYFCDILPLMKLSCSSTYDVE. Residues 196 to 216 form a helical membrane-spanning segment; it reads MAVFFLAGFDIIVTSLTVLIS. Residues 217–238 lie on the Cytoplasmic side of the membrane; it reads YAFILSSILRISSNEGRSKAFS. Residues 239-259 form a helical membrane-spanning segment; the sequence is TCSSHFAAVGLFYGSTAFMYL. Over 260 to 270 the chain is Extracellular; that stretch reads KPSTASSLAQE. Residues 271 to 291 traverse the membrane as a helical segment; that stretch reads NVASVFYTTVIPMFNPLIYSL. The Cytoplasmic segment spans residues 292-309; the sequence is RNKEVKTALDKTLRRKVF.

The protein belongs to the G-protein coupled receptor 1 family.

It is found in the cell membrane. Odorant receptor. The chain is Olfactory receptor 8A1 from Mus musculus (Mouse).